The sequence spans 66 residues: Large ribosomal subunit protein bL35 (66 aa).

Basic residues predominate over residues 1 to 16 (MPKQKTHRASAKRFKR). Residues 1 to 22 (MPKQKTHRASAKRFKRTGSGGL) are disordered.

The protein belongs to the bacterial ribosomal protein bL35 family.

This chain is Large ribosomal subunit protein bL35, found in Streptococcus suis (strain 05ZYH33).